The sequence spans 144 residues: Probable disulfide formation protein (144 aa).

A helical membrane pass occupies residues 10 to 29 (WNLLLLTWLVALISTLSALF). Residues cysteine 39 and cysteine 42 are joined by a disulfide bond. 2 helical membrane passes run 44-63 (FQRA…CYRS) and 70-87 (YALP…VHTL). A disulfide bridge links cysteine 100 with cysteine 107. The chain crosses the membrane as a helical span at residues 116 to 138 (GVVPLPALALFAFIIIAILLIII).

This sequence belongs to the DsbB family. BdbC subfamily.

Its subcellular location is the cell inner membrane. Functionally, required for disulfide bond formation in some proteins. The protein is Probable disulfide formation protein of Metapseudomonas resinovorans (Pseudomonas resinovorans).